We begin with the raw amino-acid sequence, 201 residues long: Lipopolysaccharide core heptose(II)-phosphate phosphatase (201 aa).

An N-terminal signal peptide occupies residues 1 to 35 (MLAFTLRFIKNKRYLATLAGALVIIAGLTSQHAWS).

It belongs to the phosphoglycerate mutase family. Ais subfamily.

Its subcellular location is the periplasm. Its pathway is bacterial outer membrane biogenesis; lipopolysaccharide metabolism. Its function is as follows. Catalyzes the dephosphorylation of heptose(II) of the outer membrane lipopolysaccharide core. This chain is Lipopolysaccharide core heptose(II)-phosphate phosphatase, found in Salmonella newport (strain SL254).